Consider the following 298-residue polypeptide: Esterase Rv0045c (298 aa).

Residue Ser-122 is the Nucleophile of the active site. Residues Asp-146 and His-277 contribute to the active site.

This sequence belongs to the AB hydrolase superfamily. Monomer.

It carries out the reaction a carboxylic ester + H2O = an alcohol + a carboxylate + H(+). The enzyme catalyses a butanoate ester + H2O = an aliphatic alcohol + butanoate + H(+). It catalyses the reaction an acetyl ester + H2O = an aliphatic alcohol + acetate + H(+). The catalysed reaction is a hexanoate ester + H2O = an aliphatic alcohol + hexanoate + H(+). It carries out the reaction a tetradecanoate ester + H2O = an aliphatic alcohol + tetradecanoate + H(+). With respect to regulation, hydrolysis of a fluorogenic ester substrate (MOAME) is allosterically inhibited by divalent transition metal cations (Cu(2+), Zn(2+), Ni(2+) and Co(2+)). Inhibition is largely due to a two order of magnitude drop in kcat, with relatively little change in KM. The thermal stability decreases with increasing concentrations of Ni(2+). Esterase likely involved in ester/lipid metabolism. Shows strong substrate selectivity toward short, straight chain alkyl esters with the highest activity toward four atom chains. The physiological substrate is unknown. Is able to hydrolyze ester bonds within a wide range of p-nitrophenyl derivatives (C2-C14) in vitro. This is Esterase Rv0045c from Mycobacterium tuberculosis (strain ATCC 25618 / H37Rv).